Consider the following 64-residue polypeptide: Alpha-toxin Amm5 (64 aa).

The LCN-type CS-alpha/beta domain occupies 2-64 (KDGYIIDDLN…VSIKEKGRCN (63 aa)). Intrachain disulfides connect cysteine 12–cysteine 63, cysteine 16–cysteine 36, cysteine 22–cysteine 46, and cysteine 26–cysteine 48. Residue asparagine 64 is modified to Asparagine amide.

Expressed by the venom gland.

The protein resides in the secreted. Alpha toxins bind voltage-independently at site-3 of sodium channels (Nav) and inhibit the inactivation of the activated channels, thereby blocking neuronal transmission. The polypeptide is Alpha-toxin Amm5 (Androctonus mauritanicus mauritanicus (Scorpion)).